We begin with the raw amino-acid sequence, 103 residues long: Urease subunit beta (103 aa).

This sequence belongs to the urease beta subunit family. In terms of assembly, heterotrimer of UreA (gamma), UreB (beta) and UreC (alpha) subunits. Three heterotrimers associate to form the active enzyme.

The protein resides in the cytoplasm. It catalyses the reaction urea + 2 H2O + H(+) = hydrogencarbonate + 2 NH4(+). It functions in the pathway nitrogen metabolism; urea degradation; CO(2) and NH(3) from urea (urease route): step 1/1. The chain is Urease subunit beta from Streptomyces coelicolor (strain ATCC BAA-471 / A3(2) / M145).